Here is a 109-residue protein sequence, read N- to C-terminus: T cell receptor alpha variable 26-1 (109 aa).

Positions 1–19 (MRLVARVTVFLTFGTIIDA) are cleaved as a signal peptide. Positions 20–109 (KTTQPTSMDC…TAVYYCIVRV (90 aa)) constitute an Ig-like domain. Cysteines 39 and 105 form a disulfide. N-linked (GlcNAc...) asparagine glycans are attached at residues N40 and N71.

As to quaternary structure, alpha-beta TR is a heterodimer composed of an alpha and beta chain; disulfide-linked. The alpha-beta TR is associated with the transmembrane signaling CD3 coreceptor proteins to form the TR-CD3 (TcR or TCR). The assembly of alpha-beta TR heterodimers with CD3 occurs in the endoplasmic reticulum where a single alpha-beta TR heterodimer associates with one CD3D-CD3E heterodimer, one CD3G-CD3E heterodimer and one CD247 homodimer forming a stable octameric structure. CD3D-CD3E and CD3G-CD3E heterodimers preferentially associate with TR alpha and TR beta chains, respectively. The association of the CD247 homodimer is the last step of TcR assembly in the endoplasmic reticulum and is required for transport to the cell surface.

It localises to the cell membrane. Functionally, v region of the variable domain of T cell receptor (TR) alpha chain that participates in the antigen recognition. Alpha-beta T cell receptors are antigen specific receptors which are essential to the immune response and are present on the cell surface of T lymphocytes. Recognize peptide-major histocompatibility (MH) (pMH) complexes that are displayed by antigen presenting cells (APC), a prerequisite for efficient T cell adaptive immunity against pathogens. Binding of alpha-beta TR to pMH complex initiates TR-CD3 clustering on the cell surface and intracellular activation of LCK that phosphorylates the ITAM motifs of CD3G, CD3D, CD3E and CD247 enabling the recruitment of ZAP70. In turn ZAP70 phosphorylates LAT, which recruits numerous signaling molecules to form the LAT signalosome. The LAT signalosome propagates signal branching to three major signaling pathways, the calcium, the mitogen-activated protein kinase (MAPK) kinase and the nuclear factor NF-kappa-B (NF-kB) pathways, leading to the mobilization of transcription factors that are critical for gene expression and essential for T cell growth and differentiation. The T cell repertoire is generated in the thymus, by V-(D)-J rearrangement. This repertoire is then shaped by intrathymic selection events to generate a peripheral T cell pool of self-MH restricted, non-autoaggressive T cells. Post-thymic interaction of alpha-beta TR with the pMH complexes shapes TR structural and functional avidity. This is T cell receptor alpha variable 26-1 from Homo sapiens (Human).